The chain runs to 30 residues: Photosystem II reaction center protein Psb30 (30 aa).

The Lumenal segment spans residues 1-6 (EVIAQL). Residues 7–21 (TMIAMIGIAGPMIIF) form a helical membrane-spanning segment. The Cytoplasmic segment spans residues 22-30 (LLAVRRGNL).

This sequence belongs to the Psb30/Ycf12 family. As to quaternary structure, PSII is composed of 1 copy each of membrane proteins PsbA, PsbB, PsbC, PsbD, PsbE, PsbF, PsbH, PsbI, PsbJ, PsbK, PsbL, PsbM, PsbT, PsbX, PsbY, PsbZ, Psb30/Ycf12, peripheral proteins PsbO, CyanoQ (PsbQ), PsbU, PsbV and a large number of cofactors. It forms dimeric complexes. PSII binds multiple chlorophylls, carotenoids and specific lipids. is required as a cofactor.

The protein localises to the cellular thylakoid membrane. Its function is as follows. A core subunit of photosystem II (PSII), probably helps stabilize the reaction center. PSII is a light-driven water plastoquinone oxidoreductase, using light energy to abstract electrons from H(2)O, generating a proton gradient subsequently used for ATP formation. This is Photosystem II reaction center protein Psb30 from Thermostichus vulcanus (Synechococcus vulcanus).